A 271-amino-acid polypeptide reads, in one-letter code: Probable WRKY transcription factor 69 (271 aa).

Disordered regions lie at residues 1 to 47 (MHRR…NVEK) and 130 to 166 (PSSS…TVTA). Over residues 9–18 (ESDDEEDETY) the composition is skewed to acidic residues. The WRKY DNA-binding region spans 64–130 (GEVYPPSDSW…YACDHNHPFP (67 aa)).

This sequence belongs to the WRKY group II-e family.

The protein resides in the nucleus. Its function is as follows. Transcription factor. Interacts specifically with the W box (5'-(T)TGAC[CT]-3'), a frequently occurring elicitor-responsive cis-acting element. This chain is Probable WRKY transcription factor 69 (WRKY69), found in Arabidopsis thaliana (Mouse-ear cress).